The following is a 501-amino-acid chain: Lysine--tRNA ligase (501 aa).

Mg(2+) contacts are provided by E412 and E419.

This sequence belongs to the class-II aminoacyl-tRNA synthetase family. Homodimer. It depends on Mg(2+) as a cofactor.

The protein resides in the cytoplasm. The enzyme catalyses tRNA(Lys) + L-lysine + ATP = L-lysyl-tRNA(Lys) + AMP + diphosphate. The sequence is that of Lysine--tRNA ligase (lysS) from Pasteurella multocida (strain Pm70).